The sequence spans 576 residues: Calmodulin-binding protein 60 B (576 aa).

The segment at 1–25 (MMLPTKRPAPDHGDDERNEVMVPEP) is disordered. The calmodulin-binding stretch occupies residues 1 to 80 (MMLPTKRPAP…HPSSRPSLNR (80 aa)). The span at 8–25 (PAPDHGDDERNEVMVPEP) shows a compositional bias: basic and acidic residues. The DNA-binding stretch occupies residues 150–273 (DERQDWTENE…AFHKRLAYKN (124 aa)).

The protein belongs to the plant ACBP60 protein family. As to quaternary structure, (Microbial infection) Interacts with V.dahliae SCP41. Interacts with calmodulin (CaM).

It localises to the nucleus. Transcription activator that binds DNA in a sequence-specific manner, likely 5'-GAAATTTTGG-3', to promote the expression of target genes. Required for pathogen resistance. The sequence is that of Calmodulin-binding protein 60 B from Gossypium hirsutum (Upland cotton).